Here is a 220-residue protein sequence, read N- to C-terminus: Protein-L-isoaspartate O-methyltransferase (220 aa).

Serine 64 is an active-site residue.

Belongs to the methyltransferase superfamily. L-isoaspartyl/D-aspartyl protein methyltransferase family.

The protein resides in the cytoplasm. It catalyses the reaction [protein]-L-isoaspartate + S-adenosyl-L-methionine = [protein]-L-isoaspartate alpha-methyl ester + S-adenosyl-L-homocysteine. Its function is as follows. Catalyzes the methyl esterification of L-isoaspartyl residues in peptides and proteins that result from spontaneous decomposition of normal L-aspartyl and L-asparaginyl residues. It plays a role in the repair and/or degradation of damaged proteins. In Methanoculleus marisnigri (strain ATCC 35101 / DSM 1498 / JR1), this protein is Protein-L-isoaspartate O-methyltransferase.